The primary structure comprises 530 residues: MELTLWTYEGPPHIGAMRIATSMKGLHYVLHAPQGDTYADLLFTMIERRGSRPPVTYTTFQARDLGGDTAELVKGHIFEAVERFKPEALLVGESCTAELIQDQPGSLAKGMGLNIPIVSLELPAYSKKENWGASETFYQLIRGLLKEISEDSSNNAKQSWQEEGRRPRVNLLGPSLLGFRCRDDVLEIQKILGENGIDINVIAPLGASPSDLMRLPKADANVCLYPEIAESTCLWLERNFKTPFTKVVPIGVKATQDFLEELYELLGMEVSNSISNSDQSKLPWYSKSVDSNYLTGKRVFIFGDGTHVLAAARIANEELGFEVVGIGTYSREMARKVRAAATELGLEALITNDYLEVEESIKECAPELVLGTQMERHSAKRLGIPCAVISTPMHVQDVPARYSPQMGWEGANVIFDDWVHPLMMGLEEHLIGMFRHDFEFTDGHQSHLGHLGGHASETKTSSKGINQSPNNHSPAGESIHWTSEGESELAKIPFFVRGKVRRNTEKYARQAGCREIDGETLLDAKAHFGA.

[4Fe-4S] cluster is bound at residue aspartate 36. Aspartate 290 functions as the Proton donor in the catalytic mechanism. 425–426 (GL) provides a ligand contact to substrate. Residues 448-483 (LGHLGGHASETKTSSKGINQSPNNHSPAGESIHWTS) form a disordered region. Over residues 458-473 (TKTSSKGINQSPNNHS) the composition is skewed to polar residues.

Belongs to the ChlB/BchB/BchZ family. As to quaternary structure, protochlorophyllide reductase is composed of three subunits; ChlL, ChlN and ChlB. Forms a heterotetramer of two ChlB and two ChlN subunits. [4Fe-4S] cluster is required as a cofactor.

It carries out the reaction chlorophyllide a + oxidized 2[4Fe-4S]-[ferredoxin] + 2 ADP + 2 phosphate = protochlorophyllide a + reduced 2[4Fe-4S]-[ferredoxin] + 2 ATP + 2 H2O. Its pathway is porphyrin-containing compound metabolism; chlorophyll biosynthesis (light-independent). In terms of biological role, component of the dark-operative protochlorophyllide reductase (DPOR) that uses Mg-ATP and reduced ferredoxin to reduce ring D of protochlorophyllide (Pchlide) to form chlorophyllide a (Chlide). This reaction is light-independent. The NB-protein (ChlN-ChlB) is the catalytic component of the complex. The sequence is that of Light-independent protochlorophyllide reductase subunit B from Prochlorococcus marinus (strain SARG / CCMP1375 / SS120).